Reading from the N-terminus, the 238-residue chain is EKC/KEOPS complex subunit SPAP27G11.07c (238 aa).

A Protein kinase domain is found at 20 to 238 (EKKLTVVKQG…MRGRKRTMIG (219 aa)). Residues 26-34 (VKQGAEAIT) and lysine 48 contribute to the ATP site. Catalysis depends on aspartate 148, which acts as the Proton acceptor.

This sequence belongs to the protein kinase superfamily. BUD32 family. As to quaternary structure, component of the EKC/KEOPS complex composed of at least SPAP27G11.07c/BUD32, cgi121, gon7, pgp2 and SPAC4H3.13/PCC1; the whole complex dimerizes.

It is found in the cytoplasm. The protein localises to the nucleus. It localises to the chromosome. Its subcellular location is the telomere. It carries out the reaction L-seryl-[protein] + ATP = O-phospho-L-seryl-[protein] + ADP + H(+). The enzyme catalyses L-threonyl-[protein] + ATP = O-phospho-L-threonyl-[protein] + ADP + H(+). Its function is as follows. Component of the EKC/KEOPS complex that is required for the formation of a threonylcarbamoyl group on adenosine at position 37 (t(6)A37) in tRNAs that read codons beginning with adenine. The complex is probably involved in the transfer of the threonylcarbamoyl moiety of threonylcarbamoyl-AMP (TC-AMP) to the N6 group of A37. BUD32 has ATPase activity in the context of the EKC/KEOPS complex and likely plays a supporting role to the catalytic subunit KAE1. The EKC/KEOPS complex also promotes both telomere uncapping and telomere elongation. The complex is required for efficient recruitment of transcriptional coactivators. This Schizosaccharomyces pombe (strain 972 / ATCC 24843) (Fission yeast) protein is EKC/KEOPS complex subunit SPAP27G11.07c.